The sequence spans 906 residues: Centromere protein C (906 aa).

Polar residues-rich tracts occupy residues 56–74 (SLTS…SSSK) and 87–96 (SSRTGEASLQ). Disordered regions lie at residues 56–115 (SLTS…NEVH) and 141–169 (QKAA…NKNI). Phosphoserine occurs at positions 71 and 94. A compositionally biased stretch (low complexity) spans 97 to 108 (ASAEPSEAAGGS). Glycyl lysine isopeptide (Lys-Gly) (interchain with G-Cter in SUMO2) cross-links involve residues Lys-150 and Lys-182. A disordered region spans residues 197-224 (VEDNLSKGQEGTSSEITQKRDDLSSDVQ). Residues 202–212 (SKGQEGTSSEI) show a composition bias toward polar residues. A Nuclear localization signal motif is present at residues 228–242 (KKNFSELFLETVKRK). Glycyl lysine isopeptide (Lys-Gly) (interchain with G-Cter in SUMO2) cross-links involve residues Lys-229, Lys-240, Lys-242, and Lys-266. Disordered stretches follow at residues 294–320 (RHLS…KSHS), 341–596 (AQLS…SLAI), and 623–671 (EYTS…EQDQ). Phosphoserine is present on residues Ser-302, Ser-344, Ser-363, and Ser-404. Over residues 402-424 (GQSSWENSNVSNTGQDKLQINSK) the composition is skewed to polar residues. A compositionally biased stretch (basic and acidic residues) spans 426–450 (NMKDCEEVRNEPNPKKQKPALENKK). Residues 449–466 (KKKTNSTQTNKEKSGKKF) carry the Nuclear localization signal motif. The segment covering 465–474 (KFFSGGSKNK) has biased composition (low complexity). A compositionally biased stretch (polar residues) spans 481 to 494 (TLTSRRSCRISQRP). A Phosphoserine modification is found at Ser-495. A compositionally biased stretch (basic and acidic residues) spans 496–512 (EWWRVKSDESSVDRNPS). Lys-501 participates in a covalent cross-link: Glycyl lysine isopeptide (Lys-Gly) (interchain with G-Cter in SUMO2). Position 505 is a phosphoserine (Ser-505). Over residues 523-546 (NKKKQTKRNHVSKRAGKKPGSSKR) the composition is skewed to basic residues. The Nuclear localization signal signature appears at 525–540 (KKQTKRNHVSKRAGKK). A compositionally biased stretch (polar residues) spans 626–637 (SKTQMESASNSE). Lys-640 is covalently cross-linked (Glycyl lysine isopeptide (Lys-Gly) (interchain with G-Cter in SUMO2)). Phosphoserine occurs at positions 647 and 673. Lys-692 is covalently cross-linked (Glycyl lysine isopeptide (Lys-Gly) (interchain with G-Cter in SUMO2)). An MIF2 homology domain II region spans residues 702–724 (VRRSNRIRLKPLEYWRGERVDYQ). 2 positions are modified to phosphoserine: Ser-728 and Ser-737. The Nuclear localization signal motif lies at 744-762 (KIKAQRNLGKVNKKVTKKP). A Glycyl lysine isopeptide (Lys-Gly) (interchain with G-Cter in SUMO2) cross-link involves residue Lys-770. The MIF2 homology domain III stretch occupies residues 853-906 (LVFYVNFGDLLCTLHETPYKLTTGDSFYVPSGNHYNIKNLLNVESSLLFTQIKR).

Belongs to the CENP-C/MIF2 family. As to quaternary structure, oligomer. Component of the CENPA-NAC complex, at least composed of CENPA, CENPC, CENPH, CENPM, CENPN, CENPT and CENPU. The CENPA-NAC complex interacts with the CENPA-CAD complex, composed of CENPI, CENPK, CENPL, CENPO, CENPP, CENPQ, CENPR and CENPS. Binds to DAXX. Interacts with DNMT3B. Interacts directly with CENPA. Identified in a centromere complex containing histones H2A, H2B and H4, and at least CENPA, CENPB, CENPC, CENPT, CENPN, HJURP, SUPT16H, SSRP1 and RSF1. Interacts with MEIKIN.

It localises to the nucleus. The protein resides in the chromosome. Its subcellular location is the centromere. It is found in the kinetochore. Its function is as follows. Component of the CENPA-NAC (nucleosome-associated) complex, a complex that plays a central role in assembly of kinetochore proteins, mitotic progression and chromosome segregation. The CENPA-NAC complex recruits the CENPA-CAD (nucleosome distal) complex and may be involved in incorporation of newly synthesized CENPA into centromeres. CENPC recruits DNA methylation and DNMT3B to both centromeric and pericentromeric satellite repeats and regulates the histone code in these regions. The polypeptide is Centromere protein C (Cenpc) (Mus musculus (Mouse)).